We begin with the raw amino-acid sequence, 415 residues long: Ribulose bisphosphate carboxylase large chain (415 aa).

Residues N101 and T151 each contribute to the substrate site. Catalysis depends on K153, which acts as the Proton acceptor. K155 is a substrate binding site. Residues K179, D181, and E182 each coordinate Mg(2+). An N6-carboxylysine modification is found at K179. H272 (proton acceptor) is an active-site residue. The substrate site is built by R273, H305, and S357.

The protein belongs to the RuBisCO large chain family. Type I subfamily. In terms of assembly, heterohexadecamer of 8 large chains and 8 small chains; disulfide-linked. The disulfide link is formed within the large subunit homodimers. The cofactor is Mg(2+). In terms of processing, the disulfide bond which can form in the large chain dimeric partners within the hexadecamer appears to be associated with oxidative stress and protein turnover.

The protein localises to the plastid. It localises to the chloroplast. It catalyses the reaction 2 (2R)-3-phosphoglycerate + 2 H(+) = D-ribulose 1,5-bisphosphate + CO2 + H2O. The catalysed reaction is D-ribulose 1,5-bisphosphate + O2 = 2-phosphoglycolate + (2R)-3-phosphoglycerate + 2 H(+). Its function is as follows. RuBisCO catalyzes two reactions: the carboxylation of D-ribulose 1,5-bisphosphate, the primary event in carbon dioxide fixation, as well as the oxidative fragmentation of the pentose substrate in the photorespiration process. Both reactions occur simultaneously and in competition at the same active site. This is Ribulose bisphosphate carboxylase large chain from Cibotium barometz (Scythian lamb).